We begin with the raw amino-acid sequence, 249 residues long: INO80 complex subunit 1 (249 aa).

2 C2H2-type zinc fingers span residues 73 to 100 (YTCE…LRSH) and 106 to 131 (FICS…RTVH).

In terms of assembly, component of the INO80 chromatin remodeling complex.

The protein resides in the nucleus. The protein localises to the cytoplasm. Its function is as follows. Component of the INO80 complex which remodels chromatin by shifting nucleosomes and is involved in DNA repair. This is INO80 complex subunit 1 (iec1) from Schizosaccharomyces pombe (strain 972 / ATCC 24843) (Fission yeast).